A 1008-amino-acid polypeptide reads, in one-letter code: Serine/threonine-protein kinase PRP4 homolog (1008 aa).

The disordered stretch occupies residues 1–103; it reads MAAAEAPSLR…PAKRTKLDDL (103 aa). N-acetylalanine is present on A2. Phosphoserine is present on residues S8, S20, S23, and S32. Composition is skewed to basic residues over residues 39 to 59 and 67 to 81; these read KHSR…KHKH and RKHK…HKRK. Over residues 82–91 the composition is skewed to basic and acidic residues; the sequence is EVADASDKEG. Phosphoserine occurs at positions 87 and 93. At K99 the chain carries N6-acetyllysine; alternate. Residue K99 forms a Glycyl lysine isopeptide (Lys-Gly) (interchain with G-Cter in SUMO2); alternate linkage. K111 participates in a covalent cross-link: Glycyl lysine isopeptide (Lys-Gly) (interchain with G-Cter in SUMO2). K117 participates in a covalent cross-link: Glycyl lysine isopeptide (Lys-Gly) (interchain with G-Cter in SUMO2); alternate. A Glycyl lysine isopeptide (Lys-Gly) (interchain with G-Cter in SUMO1); alternate cross-link involves residue K117. Phosphoserine is present on S131. Y140 is modified (phosphotyrosine). 2 disordered regions span residues 140 to 536 and 560 to 584; these read YESG…EDEE and SNLS…SPDD. S142, S144, and S166 each carry phosphoserine. Residues 157 to 168 are compositionally biased toward low complexity; the sequence is GNRSSTRSSSTK. Glycyl lysine isopeptide (Lys-Gly) (interchain with G-Cter in SUMO2) cross-links involve residues K170 and K177. 2 stretches are compositionally biased toward basic residues: residues 179–202 and 214–230; these read STKK…KKSK and RSKS…SKRS. Phosphoserine occurs at positions 239, 241, 257, 277, 283, 292, and 294. The segment covering 247–270 has biased composition (basic and acidic residues); the sequence is RSQEKVGKARSPVDDKAKVEDKSK. Residues 302-315 show a composition bias toward basic residues; it reads SKDRRSRSKERKSK. The span at 316-325 shows a compositional bias: basic and acidic residues; it reads RPEADKEKKP. S328, S354, S356, S366, and S368 each carry phosphoserine. The segment covering 342–367 has biased composition (basic residues); it reads PSRRPGRSPKRRSLSPKQRDKSRRSR. Phosphothreonine is present on T385. Position 387 is a phosphoserine (S387). Basic and acidic residues-rich tracts occupy residues 395–408 and 415–429; these read RSLE…ERRR and RPRD…RSKD. A phosphoserine mark is found at S427, S431, and S437. Residues 438 to 498 show a composition bias toward basic residues; sequence PARRRASRSP…RGGRRRRSRS (61 aa). Phosphoserine occurs at positions 519, 520, 521, 566, 570, 577, 579, and 581. Over residues 519-536 the composition is skewed to acidic residues; sequence SSSDDNLEDFDVEEEDEE. Residues 563 to 582 show a composition bias toward low complexity; that stretch reads SVPSEPSSPQSSTRSRSPSP. Glycyl lysine isopeptide (Lys-Gly) (interchain with G-Cter in SUMO2) cross-links involve residues K594 and K660. Residues 688–1004 form the Protein kinase domain; sequence YNVYGYTGQG…INQALQHAFI (317 aa). Residues 694-702 and K718 contribute to the ATP site; that span reads TGQGVFSNV. K718 is subject to N6-acetyllysine. Residue D816 is the Proton acceptor of the active site. At Y850 the chain carries Phosphotyrosine. S853 carries the phosphoserine modification.

It belongs to the protein kinase superfamily. CMGC Ser/Thr protein kinase family. Interacts with CLK1 C-terminus. Associates with the U5 snRNP and NCOR1 deacetylase complexes. Identified in the spliceosome C complex. In terms of processing, phosphorylated by CLK1. Autophosphorylated; phosphorylation inhibits interaction with its targets, such as PRPF6 or SMARCA4.

The protein localises to the nucleus. It is found in the chromosome. It localises to the centromere. The protein resides in the kinetochore. It catalyses the reaction L-seryl-[protein] + ATP = O-phospho-L-seryl-[protein] + ADP + H(+). It carries out the reaction L-threonyl-[protein] + ATP = O-phospho-L-threonyl-[protein] + ADP + H(+). In terms of biological role, serine/threonine kinase involved in spliceosomal assembly as well as mitosis and signaling regulation. Connects chromatin mediated regulation of transcription and pre-mRNA splicing. During spliceosomal assembly, interacts with and phosphorylates PRPF6 and PRPF31, components of the U4/U6-U5 tri-small nuclear ribonucleoprotein (snRNP), to facilitate the formation of the spliceosome B complex. Plays a role in regulating transcription and the spindle assembly checkpoint (SAC). Associates with U5 snRNP and NCOR1 deacetylase complexes which may allow a coordination of pre-mRNA splicing with chromatin remodeling events involved in transcriptional regulation. Associates and probably phosphorylates SMARCA4 and NCOR1. Phosphorylates SRSF1. Associates with kinetochores during mitosis and is necessary for recruitment and maintenance of the checkpoint proteins such as MAD1L1 and MAD12L1 at the kinetochores. Phosphorylates and regulates the activity of the transcription factors such as ELK1 and KLF13. Phosphorylates nuclear YAP1 and WWTR1/TAZ which induces nuclear exclusion and regulates Hippo signaling pathway, involved in tissue growth control. This chain is Serine/threonine-protein kinase PRP4 homolog (PRP4K), found in Bos taurus (Bovine).